The primary structure comprises 290 residues: Putative neuropeptide Y receptor type 6 (290 aa).

The Extracellular portion of the chain corresponds to 1–39; it reads MEVSLNHPASNTTSTKNNNSAFFYFESCQPPSPALLLLC. Residue asparagine 11 is glycosylated (N-linked (GlcNAc...) asparagine). The chain crosses the membrane as a helical span at residues 40-60; sequence IAYTVVLIVGLFGNLSLIIII. Over 61 to 83 the chain is Cytoplasmic; it reads FKKQRKAQNFTSILIANLSLSDT. A helical transmembrane segment spans residues 84–104; it reads LVCVMCIHFTIIYTLMDHWIF. At 105–111 the chain is on the extracellular side; that stretch reads GDTMCRL. Cysteine 109 and cysteine 196 are joined by a disulfide. The helical transmembrane segment at 112-132 threads the bilayer; it reads TSYVQSVSISVSIFSLVFTAV. The Cytoplasmic portion of the chain corresponds to 133 to 150; that stretch reads ERYQLIVNPRGWKPSVTH. A helical membrane pass occupies residues 151–171; sequence AYWGITLIWLFSLLLSIPFFL. Over 172 to 206 the chain is Extracellular; it reads SYHLTDEPFRNLSLPTDLYTHQVACVENWPSKKDR. The chain crosses the membrane as a helical span at residues 207–227; it reads LLFTTSLFLLQYFVPLGFILI. Residues 228 to 258 are Cytoplasmic-facing; it reads CYLKIVICLRRRNAKVDKKKENEGRLNENKR. Residues 259-279 form a helical membrane-spanning segment; sequence INTMLISIVVTFGACWLPRIS. The Extracellular portion of the chain corresponds to 280–290; that stretch reads SMSSLTGIMRC.

The protein belongs to the G-protein coupled receptor 1 family. Expressed in heart, skeletal muscle, gastrointestinal tissues, spleen, brain and adrenal glands.

Its subcellular location is the membrane. When expressed, is unable to bind pancreatic polypeptide (PP), neuropeptide Y (NPY), or peptide YY (PYY), suggesting that either it is functionally inactive or that it may have acquired a pancreatic polypeptide-independent function. The protein is Putative neuropeptide Y receptor type 6 (NPY6R) of Homo sapiens (Human).